The primary structure comprises 291 residues: Succinate--CoA ligase [ADP-forming] subunit alpha 1 (291 aa).

CoA contacts are provided by residues 20 to 23 (TGFQ), K46, and 99 to 101 (VTE). Residue Y162 coordinates substrate. The Tele-phosphohistidine intermediate role is filled by H249.

This sequence belongs to the succinate/malate CoA ligase alpha subunit family. In terms of assembly, heterotetramer of two alpha and two beta subunits.

The enzyme catalyses succinate + ATP + CoA = succinyl-CoA + ADP + phosphate. The catalysed reaction is GTP + succinate + CoA = succinyl-CoA + GDP + phosphate. The protein operates within carbohydrate metabolism; tricarboxylic acid cycle; succinate from succinyl-CoA (ligase route): step 1/1. In terms of biological role, succinyl-CoA synthetase functions in the citric acid cycle (TCA), coupling the hydrolysis of succinyl-CoA to the synthesis of either ATP or GTP and thus represents the only step of substrate-level phosphorylation in the TCA. The alpha subunit of the enzyme binds the substrates coenzyme A and phosphate, while succinate binding and nucleotide specificity is provided by the beta subunit. The sequence is that of Succinate--CoA ligase [ADP-forming] subunit alpha 1 from Archaeoglobus fulgidus (strain ATCC 49558 / DSM 4304 / JCM 9628 / NBRC 100126 / VC-16).